We begin with the raw amino-acid sequence, 480 residues long: MLRCREVYNICKGAMSNEVKHYDYLVIGGGSGGVASSRRAASYGAKTVLIEGKALGGTCVNVGCVPKKVMWYASDLAHRLLHARDYGLLQEVDISKEKLHFNWKEFAGKRNAYVERLNGIYERNLAKEGVEYVHGWARFNSEGQVEVTRPDQTTEKYTADHILIATGGEPVLPEGIPGAEYGVDSDGFFRLEEQPKKVVISGSGYIATEFAGVFNGLGTETHIVIRKDHVLTKFDPSIQEIVTEHYEKEGVNIHKKESIQRVEKDPNTGKLTVHLSGKIIEDVDQLVWAIGRKSLLGIAPENVGVKLGETGHVVVDEYQNTSTKGIYALGDVVGNMELTPVAIAAGRKLANRLFGPEQMRAQKQDYDNVPSVVFSHPEAGSIGLTEPQAIERYGKENIKIYQTKFTAMYYAMLEDKSPTKYKLICAGPEEKVVGLHIVGDGSAEILQGFGVAIKMGATKADFDSCVAIHPTSAEEIVTLK.

Positions 31 and 32 each coordinate FAD. Residue Ser-31 participates in glutathione binding. Arg-38 serves as a coordination point for glutathione. The FAD site is built by Glu-51, Thr-58, Cys-59, and Lys-67. A disulfide bond links Cys-59 and Cys-64. Position 121 (Tyr-121) interacts with glutathione. Ala-137 provides a ligand contact to FAD. NADP(+) is bound by residues Ile-206, Glu-209, Arg-226, and Gly-291. Asp-331 contributes to the FAD binding site. Glu-337 is a binding site for NADP(+). Thr-339 provides a ligand contact to FAD. Arg-347 lines the glutathione pocket. Val-372 lines the NADP(+) pocket. Position 422 (Lys-422) interacts with glutathione. An FAD-binding site is contributed by His-469. His-469 (proton acceptor) is an active-site residue.

It belongs to the class-I pyridine nucleotide-disulfide oxidoreductase family. Homodimer. It depends on FAD as a cofactor.

The protein resides in the cytoplasm. The protein localises to the mitochondrion. The enzyme catalyses 2 glutathione + NADP(+) = glutathione disulfide + NADPH + H(+). Functionally, catalyzes the reduction of glutathione disulfide (GSSG) to reduced glutathione (GSH). Constitutes the major mechanism to maintain a high GSH:GSSG ratio in the cytosol. In Eremothecium gossypii (strain ATCC 10895 / CBS 109.51 / FGSC 9923 / NRRL Y-1056) (Yeast), this protein is Glutathione reductase (GLR1).